A 97-amino-acid polypeptide reads, in one-letter code: Co-chaperonin GroES (97 aa).

The protein belongs to the GroES chaperonin family. As to quaternary structure, heptamer of 7 subunits arranged in a ring. Interacts with the chaperonin GroEL.

It localises to the cytoplasm. In terms of biological role, together with the chaperonin GroEL, plays an essential role in assisting protein folding. The GroEL-GroES system forms a nano-cage that allows encapsulation of the non-native substrate proteins and provides a physical environment optimized to promote and accelerate protein folding. GroES binds to the apical surface of the GroEL ring, thereby capping the opening of the GroEL channel. In Yersinia pseudotuberculosis serotype O:1b (strain IP 31758), this protein is Co-chaperonin GroES.